A 272-amino-acid polypeptide reads, in one-letter code: Shikimate dehydrogenase (NADP(+)) (272 aa).

Residues 14–16 (SKS) and Thr61 contribute to the shikimate site. Catalysis depends on Lys65, which acts as the Proton acceptor. Glu77 serves as a coordination point for NADP(+). 2 residues coordinate shikimate: Asn86 and Asp102. NADP(+)-binding positions include 126 to 130 (GAGGA), 149 to 154 (NRTASR), and Met213. A shikimate-binding site is contributed by Tyr215. NADP(+) is bound at residue Gly237.

The protein belongs to the shikimate dehydrogenase family. As to quaternary structure, homodimer.

The catalysed reaction is shikimate + NADP(+) = 3-dehydroshikimate + NADPH + H(+). It functions in the pathway metabolic intermediate biosynthesis; chorismate biosynthesis; chorismate from D-erythrose 4-phosphate and phosphoenolpyruvate: step 4/7. In terms of biological role, involved in the biosynthesis of the chorismate, which leads to the biosynthesis of aromatic amino acids. Catalyzes the reversible NADPH linked reduction of 3-dehydroshikimate (DHSA) to yield shikimate (SA). The sequence is that of Shikimate dehydrogenase (NADP(+)) from Salmonella paratyphi A (strain ATCC 9150 / SARB42).